A 206-amino-acid polypeptide reads, in one-letter code: Platelet glycoprotein Ib beta chain (206 aa).

The signal sequence occupies residues 1–26 (MGSRPRGALSLLLLLLALLSRPASGC). 2 disulfides stabilise this stretch: Cys-26-Cys-32 and Cys-30-Cys-39. Residues 27–55 (PAPCSCAGTLVDCGRRGLTWASLPAAFPP) enclose the LRRNT domain. Residues 27 to 147 (PAPCSCAGTL…RAACAPGLLC (121 aa)) lie on the Extracellular side of the membrane. An LRR repeat occupies 60 to 83 (LVLTGNNLTALPPGLLDALPALRA). The N-linked (GlcNAc...) asparagine glycan is linked to Asn-66. The region spanning 89–143 (NPWRCDCRLLPLRAWLAGRPERAPYRDLRCVAPPALRGRLLPYVAEDELRAACAP) is the LRRCT domain. 2 disulfide bridges follow: Cys-93–Cys-118 and Cys-95–Cys-141. The chain crosses the membrane as a helical span at residues 148–172 (WGALVAQLALLVLGLLHALLLALLL). The Cytoplasmic segment spans residues 173-206 (GRLRRLRARARARSIQEFSLTAPLVAESARGGAS). Ser-186 and Ser-191 each carry phosphoserine. A Phosphothreonine modification is found at Thr-193. Ser-200 bears the Phosphoserine mark.

In terms of assembly, two GP-Ib beta are disulfide-linked to one GP-Ib alpha. GP-IX is complexed with the GP-Ib heterodimer via a non covalent linkage. Interacts with TRAF4.

It localises to the membrane. Functionally, gp-Ib, a surface membrane protein of platelets, participates in the formation of platelet plugs by binding to von Willebrand factor, which is already bound to the subendothelium. The chain is Platelet glycoprotein Ib beta chain (Gp1bb) from Mus musculus (Mouse).